A 405-amino-acid polypeptide reads, in one-letter code: MTISYDEEFSSLMLRWRGSIWKAVLKDLIGFYIAYYIVLAFQWYLLDEKGKEYFTGWIMWCEIGAQYIPLSFLLGFFVSLIVARWWEQFNCISWPDKMMIMVSACLPGNENMVVRQTIARWSSLQAAIAWSGVSVKTLKRFPTERHMVASKLMTEEEYDLYMNTDAPHGKWFIPILWIVNLIKKQKQKGIIDSIQMDMLLKQVYSYRDGFAMLFVYDWIKIPLVYTQVVAIATYGYFFICLIGRQPKLDQRSMEKEITILFPIFTTFQMLFYLGWLKVGQYLMNPFGEDDDDFELNYVLDRNTAIAHMMASELSDQLPSIGAPMVPAVPHTRASFKIQDVIPKSHLAGFKLSEAEMKLIKPEDLEEHERLMEETKVTNRQRLGTLVRALEKKSRTNATINEDDEE.

A run of 4 helical transmembrane segments spans residues 28–48, 63–83, 223–243, and 256–276; these read LIGF…LLDE, IGAQ…LIVA, LVYT…CLIG, and EITI…LGWL.

Belongs to the anion channel-forming bestrophin (TC 1.A.46) family. Calcium-sensitive chloride channel subfamily.

The protein localises to the membrane. This Caenorhabditis elegans protein is Bestrophin homolog 14 (best-14).